We begin with the raw amino-acid sequence, 215 residues long: Small ribosomal subunit protein eS1 (215 aa).

Belongs to the eukaryotic ribosomal protein eS1 family.

This is Small ribosomal subunit protein eS1 from Halorubrum lacusprofundi (strain ATCC 49239 / DSM 5036 / JCM 8891 / ACAM 34).